A 116-amino-acid chain; its full sequence is Somatostatin (116 aa).

An N-terminal signal peptide occupies residues 1–24; sequence MLSCRLQCALAALSIVLALGGVTG. Residues 25-88 constitute a propeptide that is removed on maturation; the sequence is APSDPRLRQF…QDEMRLELQR (64 aa). Alanine 43 carries the post-translational modification Alanine amide. The cysteines at positions 105 and 116 are disulfide-linked.

Belongs to the somatostatin family. In terms of processing, C-terminal amidation of the neuronostatin peptide is required for its biological activity, including for the regulation of mean arterial pressure.

The protein localises to the secreted. In terms of biological role, inhibits the secretion of pituitary hormones, including that of growth hormone/somatotropin (GH1), PRL, ACTH, luteinizing hormone (LH) and TSH. Also impairs ghrelin- and GnRH-stimulated secretion of GH1 and LH; the inhibition of ghrelin-stimulated secretion of GH1 can be further increased by neuronostatin. May enhance low-glucose-induced glucagon release by pancreatic alpha cells. This effect may be mediated by binding to GPR107 and PKA activation. May regulate cardiac contractile function. May compromise cardiomyocyte viability. In the central nervous system, may impair memory retention and may affect hippocampal excitability. May also have anxiolytic and anorexigenic effects. May play a role in arterial pressure regulation. May inhibit basal, but not ghrelin- or GnRH-stimulated secretion of GH1 or LH, but does not affect the release of other pituitary hormones, including PRL, ACTH, FSH or TSH. Potentiates inhibitory action of somatostatin on ghrelin-stimulated secretion of GH1, but not that on GnRH-stimulated secretion of LH. The protein is Somatostatin (SST) of Bos taurus (Bovine).